The following is a 405-amino-acid chain: Pyruvate decarboxylase 2 (405 aa).

The tract at residues 232-314 (DSWFNCQKLK…FLINNGGYTI (83 aa)) is thiamine pyrophosphate binding. The Mg(2+) site is built by aspartate 282, asparagine 309, and glycine 311. Residue glutamate 315 coordinates substrate.

Belongs to the TPP enzyme family. As to quaternary structure, homotetramer. A metal cation is required as a cofactor. It depends on thiamine diphosphate as a cofactor.

It catalyses the reaction a 2-oxocarboxylate + H(+) = an aldehyde + CO2. The polypeptide is Pyruvate decarboxylase 2 (PDC2) (Pisum sativum (Garden pea)).